Here is a 35-residue protein sequence, read N- to C-terminus: Z-limacoditoxin(1)-Dv4 (35 aa).

The signal sequence occupies residues 1 to 22; it reads MKKTFLPIFLVILLASYALGNP. A Pyrrolidone carboxylic acid modification is found at Q23. P32 carries the post-translational modification Proline amide.

This sequence belongs to the limacoditoxin-1 (ACP-like) family. In terms of tissue distribution, expressed by the venom secretory cell of the spine. The spine is a cuticular structure containing a single large nucleated venom-secreting cell at its base. It is an independent unit capable of producing, storing and injecting venom. On the back of D.vulnerans caterpillars, spines are grouped together by 50 to 100 to form scoli, of which there are eight in D.vulnerans.

It localises to the secreted. Functionally, potently activates insect GPCR. More precisely, it activates the ACP receptor (ACPR) from the mosquito A.aegypti (EC(50)=3.07 nM) with a potency comparable to that of the endogenous ligand. Has no activity on receptors of the closely related neuropeptides adipokinetic hormone and corazonin. In vivo, does not reveal any observable effects when injected into crickets (A.domesticus). Does not induce increase in intracellular calcium in mouse DRG neurons, suggesting that it does not induce pain. In Doratifera vulnerans (Mottled cup moth), this protein is Z-limacoditoxin(1)-Dv4.